The following is a 99-amino-acid chain: Aspartyl/glutamyl-tRNA(Asn/Gln) amidotransferase subunit C (99 aa).

Belongs to the GatC family. Heterotrimer of A, B and C subunits.

It catalyses the reaction L-glutamyl-tRNA(Gln) + L-glutamine + ATP + H2O = L-glutaminyl-tRNA(Gln) + L-glutamate + ADP + phosphate + H(+). The catalysed reaction is L-aspartyl-tRNA(Asn) + L-glutamine + ATP + H2O = L-asparaginyl-tRNA(Asn) + L-glutamate + ADP + phosphate + 2 H(+). Allows the formation of correctly charged Asn-tRNA(Asn) or Gln-tRNA(Gln) through the transamidation of misacylated Asp-tRNA(Asn) or Glu-tRNA(Gln) in organisms which lack either or both of asparaginyl-tRNA or glutaminyl-tRNA synthetases. The reaction takes place in the presence of glutamine and ATP through an activated phospho-Asp-tRNA(Asn) or phospho-Glu-tRNA(Gln). The polypeptide is Aspartyl/glutamyl-tRNA(Asn/Gln) amidotransferase subunit C (Burkholderia thailandensis (strain ATCC 700388 / DSM 13276 / CCUG 48851 / CIP 106301 / E264)).